We begin with the raw amino-acid sequence, 574 residues long: Proline--tRNA ligase (574 aa).

This sequence belongs to the class-II aminoacyl-tRNA synthetase family. ProS type 1 subfamily. In terms of assembly, homodimer.

It is found in the cytoplasm. It catalyses the reaction tRNA(Pro) + L-proline + ATP = L-prolyl-tRNA(Pro) + AMP + diphosphate. In terms of biological role, catalyzes the attachment of proline to tRNA(Pro) in a two-step reaction: proline is first activated by ATP to form Pro-AMP and then transferred to the acceptor end of tRNA(Pro). As ProRS can inadvertently accommodate and process non-cognate amino acids such as alanine and cysteine, to avoid such errors it has two additional distinct editing activities against alanine. One activity is designated as 'pretransfer' editing and involves the tRNA(Pro)-independent hydrolysis of activated Ala-AMP. The other activity is designated 'posttransfer' editing and involves deacylation of mischarged Ala-tRNA(Pro). The misacylated Cys-tRNA(Pro) is not edited by ProRS. This chain is Proline--tRNA ligase, found in Hahella chejuensis (strain KCTC 2396).